The sequence spans 111 residues: ASFBZAPPGBVKSGEKIFKTKCAQCHTVDKGAGHKQGPNLNGLFGRQSGTTPGYSYSAANKNMAVIWGENTLYDYLLNPKKYIPGTKMVFPGLKKPQERADLIAYLKEATA.

Residue alanine 1 is modified to N-acetylalanine. The heme c site is built by cysteine 22, cysteine 25, and histidine 26. The residue at position 80 (lysine 80) is an N6,N6,N6-trimethyllysine. Residue methionine 88 coordinates heme c. At lysine 94 the chain carries N6,N6,N6-trimethyllysine.

Belongs to the cytochrome c family. Binds 1 heme c group covalently per subunit.

It is found in the mitochondrion intermembrane space. Functionally, electron carrier protein. The oxidized form of the cytochrome c heme group can accept an electron from the heme group of the cytochrome c1 subunit of cytochrome reductase. Cytochrome c then transfers this electron to the cytochrome oxidase complex, the final protein carrier in the mitochondrial electron-transport chain. The sequence is that of Cytochrome c from Sesamum indicum (Oriental sesame).